The following is a 398-amino-acid chain: Exodeoxyribonuclease 7 large subunit (398 aa).

The protein belongs to the XseA family. In terms of assembly, heterooligomer composed of large and small subunits.

It is found in the cytoplasm. It carries out the reaction Exonucleolytic cleavage in either 5'- to 3'- or 3'- to 5'-direction to yield nucleoside 5'-phosphates.. In terms of biological role, bidirectionally degrades single-stranded DNA into large acid-insoluble oligonucleotides, which are then degraded further into small acid-soluble oligonucleotides. This Chlorobaculum tepidum (strain ATCC 49652 / DSM 12025 / NBRC 103806 / TLS) (Chlorobium tepidum) protein is Exodeoxyribonuclease 7 large subunit.